The primary structure comprises 424 residues: Choline-phosphate cytidylyltransferase (424 aa).

The disordered stretch occupies residues 1-70; the sequence is MANPTTGKSS…RKRRRLTKEF (70 aa). Over residues 14-24 the composition is skewed to low complexity; sequence KLSNSSLSNLF. The residue at position 16 (serine 16) is a Phosphoserine. Positions 35–44 are enriched in acidic residues; that stretch reads ETEEQDNEDK. Positions 45-55 are enriched in basic and acidic residues; that stretch reads DESKNQDENKD. At threonine 59 the chain carries Phosphothreonine. CTP-binding positions include 111–119 and lysine 149; that span reads VFDLFHLGH. Lysine 149 and tryptophan 178 together coordinate substrate. CTP contacts are provided by residues 195-196, tyrosine 200, and 223-227; these read HD and RTNGV. Serine 346 bears the Phosphoserine mark. Residues 348 to 424 are disordered; that stretch reads ATEFANEFTG…LTQKKKQSAN (77 aa). Residues 381–398 show a composition bias toward low complexity; the sequence is NSNNTNTNSDSDSNTNST. Residue serine 401 is modified to Phosphoserine; by CK2.

This sequence belongs to the cytidylyltransferase family.

It is found in the membrane. The enzyme catalyses phosphocholine + CTP + H(+) = CDP-choline + diphosphate. The protein operates within phospholipid metabolism; phosphatidylcholine biosynthesis; phosphatidylcholine from phosphocholine: step 1/2. Its function is as follows. Catalyzes the key rate-limiting step in the CDP-choline pathway for phosphatidylcholine biosynthesis. The chain is Choline-phosphate cytidylyltransferase (PCT1) from Saccharomyces cerevisiae (strain ATCC 204508 / S288c) (Baker's yeast).